The chain runs to 41 residues: Replication-associated protein (41 aa).

Functionally, involved in viral RNA replication. The chain is Replication-associated protein from Potato leafroll virus (strain Potato/Scotland/strain 1/1984) (PLrV).